The chain runs to 248 residues: Transcriptional activator protein FnrL (248 aa).

The 79-residue stretch at 154-232 folds into the HTH crp-type domain; the sequence is KTAREKIASL…KRHVIVTDFA (79 aa). The segment at residues 191–210 is a DNA-binding region (H-T-H motif); that stretch reads REEMADYLGLTLETVSRQVS.

Functionally, anaerobic regulatory protein; transcriptional activator of hemA. Appears to regulate other genes. The sequence is that of Transcriptional activator protein FnrL (fnrL) from Cereibacter sphaeroides (strain ATCC 17023 / DSM 158 / JCM 6121 / CCUG 31486 / LMG 2827 / NBRC 12203 / NCIMB 8253 / ATH 2.4.1.) (Rhodobacter sphaeroides).